The chain runs to 637 residues: E3 ubiquitin-protein ligase CHFR (637 aa).

Residues 31–82 (CTVGRKKDCDLSFPANKLVSGNHCKITHDQNSGKVWLEDMSTNGTVINMSKV) enclose the FHA domain. Disordered stretches follow at residues 120 to 172 (ESAS…SSSL) and 193 to 267 (SSSA…EGAT). The segment covering 130 to 142 (GREEDSDLTETES) has biased composition (acidic residues). Over residues 193 to 210 (SSSAVCKGDSTSSGSPAQ) the composition is skewed to polar residues. Basic and acidic residues predominate over residues 258–267 (SGKEKTEGAT). An RING-type zinc finger spans residues 277–316 (CIICQDLLYDCISVQPCMHTFCAACYSGWMERSSFCPTCR). Residues 428-447 (KTAGDGPSTSSDSTTAAPQE) are disordered. Positions 429-445 (TAGDGPSTSSDSTTAAP) are enriched in low complexity. Residues 606–628 (PNCYWGRNCRTQVKAHHALKFNH) form a PBZ-type zinc finger.

The protein belongs to the CHFR family.

It is found in the nucleus. It localises to the PML body. The catalysed reaction is S-ubiquitinyl-[E2 ubiquitin-conjugating enzyme]-L-cysteine + [acceptor protein]-L-lysine = [E2 ubiquitin-conjugating enzyme]-L-cysteine + N(6)-ubiquitinyl-[acceptor protein]-L-lysine.. Its pathway is protein modification; protein ubiquitination. In terms of biological role, E3 ubiquitin-protein ligase that functions in the antephase checkpoint by actively delaying passage into mitosis in response to microtubule poisons. Acts in early prophase before chromosome condensation, when the centrosome move apart from each other along the periphery of the nucleus. Probably involved in signaling the presence of mitotic stress caused by microtubule poisons by mediating the 'Lys-48'-linked ubiquitination of target proteins, leading to their degradation by the proteasome. May also promote the formation of 'Lys-63'-linked polyubiquitin chains and functions with the specific ubiquitin-conjugating ubc13-mms2 (ube2n-ube2v2) heterodimer. Substrates that are polyubiquitinated at 'Lys-63' are usually not targeted for degradation, but are rather involved in signaling cellular stress. The sequence is that of E3 ubiquitin-protein ligase CHFR (chfr) from Danio rerio (Zebrafish).